Consider the following 294-residue polypeptide: Flagellin B1 (294 aa).

A propeptide spanning residues 1–8 (MKTRTRKG) is cleaved from the precursor.

The protein belongs to the archaeal flagellin family.

It localises to the archaeal flagellum. In terms of biological role, flagellin is the subunit protein which polymerizes to form the filaments of archaeal flagella. The chain is Flagellin B1 (flaB1) from Thermococcus kodakarensis (strain ATCC BAA-918 / JCM 12380 / KOD1) (Pyrococcus kodakaraensis (strain KOD1)).